We begin with the raw amino-acid sequence, 406 residues long: S-adenosylmethionine synthase (406 aa).

Residue H17 coordinates ATP. D19 lines the Mg(2+) pocket. A K(+)-binding site is contributed by E45. Residues E58 and Q101 each coordinate L-methionine. The tract at residues 101 to 111 (QSAEINQGVAR) is flexible loop. Residues 178–180 (DGK), D258, 264–265 (RK), A281, and K285 each bind ATP. L-methionine is bound at residue D258. K289 contacts L-methionine.

The protein belongs to the AdoMet synthase family. In terms of assembly, homotetramer; dimer of dimers. It depends on Mg(2+) as a cofactor. K(+) serves as cofactor.

It is found in the cytoplasm. It carries out the reaction L-methionine + ATP + H2O = S-adenosyl-L-methionine + phosphate + diphosphate. The protein operates within amino-acid biosynthesis; S-adenosyl-L-methionine biosynthesis; S-adenosyl-L-methionine from L-methionine: step 1/1. Catalyzes the formation of S-adenosylmethionine (AdoMet) from methionine and ATP. The overall synthetic reaction is composed of two sequential steps, AdoMet formation and the subsequent tripolyphosphate hydrolysis which occurs prior to release of AdoMet from the enzyme. This chain is S-adenosylmethionine synthase, found in Bifidobacterium longum subsp. infantis (strain ATCC 15697 / DSM 20088 / JCM 1222 / NCTC 11817 / S12).